Here is a 631-residue protein sequence, read N- to C-terminus: Dolichyl-diphosphooligosaccharide--protein glycosyltransferase subunit 2 (631 aa).

Residues 1-22 form the signal peptide; that stretch reads MAPPGSSTVFLLALTIIASTWA. At 23–540 the chain is on the lumenal side; the sequence is LTPTHYLTKH…REPEKRPPTV (518 aa). N-linked (GlcNAc...) asparagine glycosylation occurs at N106. K154 participates in a covalent cross-link: Glycyl lysine isopeptide (Lys-Gly) (interchain with G-Cter in ubiquitin). The chain crosses the membrane as a helical span at residues 541–561; that stretch reads VSNTFTALILSPLLLLFALWI. Over 562 to 571 the chain is Cytoplasmic; that stretch reads RIGANVSNFT. The chain crosses the membrane as a helical span at residues 572–592; that stretch reads FAPSTIIFHLGHAAMLGLMYV. Over 593 to 596 the chain is Lumenal; that stretch reads YWTQ. The helical transmembrane segment at 597–617 threads the bilayer; the sequence is LNMFQTLKYLAILGSVTFLAG. At 618 to 631 the chain is on the cytoplasmic side; that stretch reads NRMLAQQAVKRTAH.

The protein belongs to the SWP1 family. Component of the oligosaccharyltransferase (OST) complex. OST exists in two different complex forms which contain common core subunits RPN1, RPN2, OST48, OST4, DAD1 and TMEM258, either STT3A or STT3B as catalytic subunits, and form-specific accessory subunits. STT3A complex assembly occurs through the formation of 3 subcomplexes. Subcomplex 1 contains RPN1 and TMEM258, subcomplex 2 contains the STT3A-specific subunits STT3A, DC2/OSTC, and KCP2 as well as the core subunit OST4, and subcomplex 3 contains RPN2, DAD1, and OST48. The STT3A complex can form stable complexes with the Sec61 complex or with both the Sec61 and TRAP complexes. Interacts with DDI2. Interacts with TMEM35A/NACHO. Expressed in all tissues tested.

It is found in the endoplasmic reticulum. It localises to the endoplasmic reticulum membrane. The protein operates within protein modification; protein glycosylation. In terms of biological role, subunit of the oligosaccharyl transferase (OST) complex that catalyzes the initial transfer of a defined glycan (Glc(3)Man(9)GlcNAc(2) in eukaryotes) from the lipid carrier dolichol-pyrophosphate to an asparagine residue within an Asn-X-Ser/Thr consensus motif in nascent polypeptide chains, the first step in protein N-glycosylation. N-glycosylation occurs cotranslationally and the complex associates with the Sec61 complex at the channel-forming translocon complex that mediates protein translocation across the endoplasmic reticulum (ER). All subunits are required for a maximal enzyme activity. The chain is Dolichyl-diphosphooligosaccharide--protein glycosyltransferase subunit 2 from Homo sapiens (Human).